Here is a 101-residue protein sequence, read N- to C-terminus: ATP synthase subunit c (101 aa).

2 consecutive transmembrane segments (helical) span residues 31–51 (AFAYLGAGLAMIGVIGVGAGQ) and 81–101 (AISETSSIYALLVALILIFVG).

It belongs to the ATPase C chain family. F-type ATPases have 2 components, F(1) - the catalytic core - and F(0) - the membrane proton channel. F(1) has five subunits: alpha(3), beta(3), gamma(1), delta(1), epsilon(1). F(0) has three main subunits: a(1), b(2) and c(10-14). The alpha and beta chains form an alternating ring which encloses part of the gamma chain. F(1) is attached to F(0) by a central stalk formed by the gamma and epsilon chains, while a peripheral stalk is formed by the delta and b chains.

It localises to the cell membrane. Functionally, f(1)F(0) ATP synthase produces ATP from ADP in the presence of a proton or sodium gradient. F-type ATPases consist of two structural domains, F(1) containing the extramembraneous catalytic core and F(0) containing the membrane proton channel, linked together by a central stalk and a peripheral stalk. During catalysis, ATP synthesis in the catalytic domain of F(1) is coupled via a rotary mechanism of the central stalk subunits to proton translocation. Key component of the F(0) channel; it plays a direct role in translocation across the membrane. A homomeric c-ring of between 10-14 subunits forms the central stalk rotor element with the F(1) delta and epsilon subunits. This Mesomycoplasma hyopneumoniae (strain J / ATCC 25934 / NCTC 10110) (Mycoplasma hyopneumoniae) protein is ATP synthase subunit c.